The sequence spans 103 residues: Large ribosomal subunit protein uL24 (103 aa).

The protein belongs to the universal ribosomal protein uL24 family. Part of the 50S ribosomal subunit.

One of two assembly initiator proteins, it binds directly to the 5'-end of the 23S rRNA, where it nucleates assembly of the 50S subunit. In terms of biological role, one of the proteins that surrounds the polypeptide exit tunnel on the outside of the subunit. The chain is Large ribosomal subunit protein uL24 from Exiguobacterium sibiricum (strain DSM 17290 / CCUG 55495 / CIP 109462 / JCM 13490 / 255-15).